Reading from the N-terminus, the 334-residue chain is Large ribosomal subunit protein uL3 (334 aa).

The segment covering 1 to 10 (MGMKKSRPRR) has biased composition (basic residues). The disordered stretch occupies residues 1 to 20 (MGMKKSRPRRGSLAFSPRKR).

It belongs to the universal ribosomal protein uL3 family. Part of the 50S ribosomal subunit. Forms a cluster with proteins L14 and L24e.

One of the primary rRNA binding proteins, it binds directly near the 3'-end of the 23S rRNA, where it nucleates assembly of the 50S subunit. The polypeptide is Large ribosomal subunit protein uL3 (Methanococcus maripaludis (strain C7 / ATCC BAA-1331)).